The chain runs to 307 residues: Glycine--tRNA ligase alpha subunit (307 aa).

Belongs to the class-II aminoacyl-tRNA synthetase family. Tetramer of two alpha and two beta subunits.

The protein localises to the cytoplasm. The enzyme catalyses tRNA(Gly) + glycine + ATP = glycyl-tRNA(Gly) + AMP + diphosphate. The polypeptide is Glycine--tRNA ligase alpha subunit (Aeromonas salmonicida (strain A449)).